The following is a 412-amino-acid chain: DNA polymerase IV (412 aa).

The UmuC domain occupies Ile12–Gly193. 2 residues coordinate Mg(2+): Asp16 and Asp112. Glu113 is a catalytic residue. The interval Lys235–Met257 is disordered. A compositionally biased stretch (polar residues) spans Gln246–Met257.

The protein belongs to the DNA polymerase type-Y family. In terms of assembly, monomer. Mg(2+) is required as a cofactor.

Its subcellular location is the cytoplasm. It catalyses the reaction DNA(n) + a 2'-deoxyribonucleoside 5'-triphosphate = DNA(n+1) + diphosphate. Functionally, poorly processive, error-prone DNA polymerase involved in untargeted mutagenesis. Copies undamaged DNA at stalled replication forks, which arise in vivo from mismatched or misaligned primer ends. These misaligned primers can be extended by PolIV. Exhibits no 3'-5' exonuclease (proofreading) activity. May be involved in translesional synthesis, in conjunction with the beta clamp from PolIII. The chain is DNA polymerase IV from Bacillus anthracis.